Consider the following 599-residue polypeptide: MTELMTQNSALPVWQSQDHQDDPVIAELRNHFGPDAFSVQPTRTGIPVVWVKREQILKVLTFLKKLPKPYVMLYDLHGVDERLRTHRQGLPAADFTVFYHLISIDRNRDIMLKVALSENDLHLPTCTRIFPNANWYERETWEMFGMTFDGHTHLTRIMMPKSWEGHPLRKDYPARATEFDPFVLTKQKEDLEMEGLTFKPEEWGMKRGKDNEDFMFLNLGPNHPSAHGAFRIILQLDGEEIVDCVPDIGYHHRGAEKMGERQSWHSYIPYTDRVEYLGGCVNEMPYVLAVEKLAGIVVPDRVNVIRVMLSELFRINSHLLYISTYIQDVGGMTPVFLAFTDRQKIYDVVEAITGFRMHPAWFRIGGVAHDLPRGWEGLLREFLDWLPKRLDSYVKVALRNSVLRARAEGVAAYGAKEALDWGVTGAALRATGIDFDVRKWRPYSGYENFNFEVPVGDGVSDCYSRVMLKVEEMRQSLRILEQCLNNMPAGPFKADHPLTTPPPKERTLQHIETLITHFLQVSWGPVMPANESFQMIEATKGINSYYLTSDGSTMSYRTRIRTPSFPHLQQIPSVIRGSLVSDLIVYLGSIDFVMSDVDR.

The segment at 1-189 is NADH dehydrogenase I subunit C; that stretch reads MTELMTQNSA…DPFVLTKQKE (189 aa). Positions 213–599 are NADH dehydrogenase I subunit D; sequence DFMFLNLGPN…IDFVMSDVDR (387 aa).

It in the N-terminal section; belongs to the complex I 30 kDa subunit family. The protein in the C-terminal section; belongs to the complex I 49 kDa subunit family. As to quaternary structure, NDH-1 is composed of 13 different subunits. Subunits NuoB, CD, E, F, and G constitute the peripheral sector of the complex.

The protein resides in the cell inner membrane. The enzyme catalyses a quinone + NADH + 5 H(+)(in) = a quinol + NAD(+) + 4 H(+)(out). NDH-1 shuttles electrons from NADH, via FMN and iron-sulfur (Fe-S) centers, to quinones in the respiratory chain. The immediate electron acceptor for the enzyme in this species is believed to be ubiquinone. Couples the redox reaction to proton translocation (for every two electrons transferred, four hydrogen ions are translocated across the cytoplasmic membrane), and thus conserves the redox energy in a proton gradient. The sequence is that of NADH-quinone oxidoreductase subunit C/D from Sodalis glossinidius (strain morsitans).